A 98-amino-acid polypeptide reads, in one-letter code: NADH-ubiquinone oxidoreductase chain 4L (98 aa).

Helical transmembrane passes span 1-21 (MPII…GMLF), 29-49 (SLLC…LMAL), and 58-78 (IVPI…LALL).

The protein belongs to the complex I subunit 4L family. As to quaternary structure, core subunit of respiratory chain NADH dehydrogenase (Complex I) which is composed of 45 different subunits.

Its subcellular location is the mitochondrion inner membrane. The catalysed reaction is a ubiquinone + NADH + 5 H(+)(in) = a ubiquinol + NAD(+) + 4 H(+)(out). Its function is as follows. Core subunit of the mitochondrial membrane respiratory chain NADH dehydrogenase (Complex I) which catalyzes electron transfer from NADH through the respiratory chain, using ubiquinone as an electron acceptor. Part of the enzyme membrane arm which is embedded in the lipid bilayer and involved in proton translocation. The chain is NADH-ubiquinone oxidoreductase chain 4L (MT-ND4L) from Trachypithecus obscurus (Dusky leaf-monkey).